A 200-amino-acid polypeptide reads, in one-letter code: Holliday junction branch migration complex subunit RuvA (200 aa).

Residues 1–64 (MFAYFKGSLV…EDALQLYGFF (64 aa)) are domain I. Residues 65–143 (KEEERQLFRL…KLPLVTPAAG (79 aa)) form a domain II region. The tract at residues 143-147 (GKAAM) is flexible linker. The tract at residues 148-200 (PSHHVKDDAVHALVTLGFSRLLAQKAVSALLEEKPEQSVEEVIKYALATIHNS) is domain III.

This sequence belongs to the RuvA family. As to quaternary structure, homotetramer. Forms an RuvA(8)-RuvB(12)-Holliday junction (HJ) complex. HJ DNA is sandwiched between 2 RuvA tetramers; dsDNA enters through RuvA and exits via RuvB. An RuvB hexamer assembles on each DNA strand where it exits the tetramer. Each RuvB hexamer is contacted by two RuvA subunits (via domain III) on 2 adjacent RuvB subunits; this complex drives branch migration. In the full resolvosome a probable DNA-RuvA(4)-RuvB(12)-RuvC(2) complex forms which resolves the HJ.

It is found in the cytoplasm. Its function is as follows. The RuvA-RuvB-RuvC complex processes Holliday junction (HJ) DNA during genetic recombination and DNA repair, while the RuvA-RuvB complex plays an important role in the rescue of blocked DNA replication forks via replication fork reversal (RFR). RuvA specifically binds to HJ cruciform DNA, conferring on it an open structure. The RuvB hexamer acts as an ATP-dependent pump, pulling dsDNA into and through the RuvAB complex. HJ branch migration allows RuvC to scan DNA until it finds its consensus sequence, where it cleaves and resolves the cruciform DNA. The polypeptide is Holliday junction branch migration complex subunit RuvA (Chlorobium phaeobacteroides (strain DSM 266 / SMG 266 / 2430)).